Here is a 635-residue protein sequence, read N- to C-terminus: MIDSARYPRLARIQTPDDLRTFDESELRAVADELRAYLIESVGKSGGHFAAGLGVIELTVALHYLYQTPVDQLVWDVGHQTYPHKILTGRRDQIHTVKQKDGVAPFPKREESEYDTFGVGHSSTSISAALGMAIARQSEGDDRKIVAVIGDGAMTAGMAFEALMHAGGMDPEPNLLVILNDNNMSISEAVGGLTKMLGRATGSRTLNALREGGKKILGDKKNNPARFVKRWEEHWKGMFVPSTMFEEMGFHYTGPIDGHDMPALLSTLKTLRASKGPKLLHVMTTKGKGYEPAEGDQIGYHAVGPFDPDKGLVAKAGAKKPTYTDVFSDWLCDAAAAEPRLYGITPAMREGSGLVRFSKEYPQRYFDVAIAEQHAVTLAAGMATQGGKPVVAIYSTFLQRAYDQLVHDVAIQDLDVLFAIDRAGVVGPDGATHAGNLDLSFLRCVPNLVVMAPSNEAECRQMLSTGLQHPGPAAVRYPRGTGTGVAAGTDLSTLPIGKGELRLQGSRIALLAFGSTVAAAEQVGRELGLSVVNMRFIKPLDRELVLAVAAQHEGLVTIEDNVVAGGAGSGVGELLNAEGVLRPILHLGLPDSYQHHASREDLLAEAGIDAAGIRAAVLKRWPQLVTGTPPLSAAG.

Thiamine diphosphate-binding positions include His-79 and 120 to 122 (GHS). Asp-151 is a binding site for Mg(2+). Residues 152–153 (GA), Asn-182, Tyr-290, and Glu-372 contribute to the thiamine diphosphate site. Asn-182 serves as a coordination point for Mg(2+).

The protein belongs to the transketolase family. DXPS subfamily. In terms of assembly, homodimer. It depends on Mg(2+) as a cofactor. Requires thiamine diphosphate as cofactor.

It carries out the reaction D-glyceraldehyde 3-phosphate + pyruvate + H(+) = 1-deoxy-D-xylulose 5-phosphate + CO2. It functions in the pathway metabolic intermediate biosynthesis; 1-deoxy-D-xylulose 5-phosphate biosynthesis; 1-deoxy-D-xylulose 5-phosphate from D-glyceraldehyde 3-phosphate and pyruvate: step 1/1. Its function is as follows. Catalyzes the acyloin condensation reaction between C atoms 2 and 3 of pyruvate and glyceraldehyde 3-phosphate to yield 1-deoxy-D-xylulose-5-phosphate (DXP). In Stenotrophomonas maltophilia (strain K279a), this protein is 1-deoxy-D-xylulose-5-phosphate synthase.